The primary structure comprises 60 residues: Metallothionein A (60 aa).

Residues 1 to 28 form a beta region; that stretch reads MDPCECSKSGNCNCGGSCTCTNCSCKSC. A divalent metal cation is bound by residues Cys4, Cys6, Cys12, Cys14, Cys18, Cys20, Cys23, Cys25, Cys28, Cys32, Cys33, Cys35, Cys36, Cys40, Cys43, Cys47, Cys49, Cys54, Cys58, and Cys59. The segment at 29 to 60 is alpha; the sequence is KKSCCPCCPSGCTKCASGCVCKGKTCDTSCCQ.

It belongs to the metallothionein superfamily. Type 1 family.

Its function is as follows. Metallothioneins have a high content of cysteine residues that bind various heavy metals. The protein is Metallothionein A (mta) of Parachaenichthys charcoti (Charcot's dragonfish).